We begin with the raw amino-acid sequence, 236 residues long: Small ribosomal subunit protein uS3c (236 aa).

Positions 47-127 (VRKYVRSSSR…KLNMTLSQVA (81 aa)) constitute a KH type-2 domain.

It belongs to the universal ribosomal protein uS3 family. In terms of assembly, part of the 30S ribosomal subunit.

Its subcellular location is the plastid. It is found in the chloroplast. In Zygnema circumcarinatum (Green alga), this protein is Small ribosomal subunit protein uS3c (rps3).